The primary structure comprises 77 residues: Large ribosomal subunit protein bL28 (77 aa).

Belongs to the bacterial ribosomal protein bL28 family.

This chain is Large ribosomal subunit protein bL28, found in Ralstonia nicotianae (strain ATCC BAA-1114 / GMI1000) (Ralstonia solanacearum).